We begin with the raw amino-acid sequence, 370 residues long: Anhydro-N-acetylmuramic acid kinase (370 aa).

Residue 13–20 (GTSLDGVD) coordinates ATP.

The protein belongs to the anhydro-N-acetylmuramic acid kinase family.

It carries out the reaction 1,6-anhydro-N-acetyl-beta-muramate + ATP + H2O = N-acetyl-D-muramate 6-phosphate + ADP + H(+). It participates in amino-sugar metabolism; 1,6-anhydro-N-acetylmuramate degradation. It functions in the pathway cell wall biogenesis; peptidoglycan recycling. Its function is as follows. Catalyzes the specific phosphorylation of 1,6-anhydro-N-acetylmuramic acid (anhMurNAc) with the simultaneous cleavage of the 1,6-anhydro ring, generating MurNAc-6-P. Is required for the utilization of anhMurNAc either imported from the medium or derived from its own cell wall murein, and thus plays a role in cell wall recycling. This chain is Anhydro-N-acetylmuramic acid kinase, found in Vibrio cholerae serotype O1 (strain ATCC 39315 / El Tor Inaba N16961).